Here is a 208-residue protein sequence, read N- to C-terminus: RNA chaperone ProQ (208 aa).

2 stretches are compositionally biased toward basic and acidic residues: residues 99 to 115 (AQET…EKNK) and 126 to 135 (PAKDKPENTA). A disordered region spans residues 99-149 (AQETLKESKAKVAEKNKATNKAAAKKAPAKDKPENTAKAKPKTAKKPAKPK). A compositionally biased stretch (basic residues) spans 137-149 (AKPKTAKKPAKPK).

This sequence belongs to the ProQ family.

The protein localises to the cytoplasm. RNA chaperone with significant RNA binding, RNA strand exchange and RNA duplexing activities. The polypeptide is RNA chaperone ProQ (Idiomarina loihiensis (strain ATCC BAA-735 / DSM 15497 / L2-TR)).